Consider the following 875-residue polypeptide: Phospholipase DDHD1 (875 aa).

Disordered regions lie at residues 1 to 30 (MNYP…LGSD), 101 to 153 (LRYY…GAAA), and 206 to 231 (RAQD…SVED). Phosphoserine is present on residues Ser8 and Ser11. Residues 130–140 (SGGGGAAGGGP) are compositionally biased toward gly residues. The span at 217-228 (GPASPAGPASSS) shows a compositional bias: low complexity. Residue Ser540 is part of the active site. One can recognise a DDHD domain in the interval 614–861 (LKFKVENFFC…ALFLLTFMYK (248 aa)). A Phosphoserine modification is found at Ser726. The disordered stretch occupies residues 770–804 (RSSASQPSETSRDSIEDEKKPVASPPMTTVATQTL). The segment covering 779 to 790 (TSRDSIEDEKKP) has biased composition (basic and acidic residues). A compositionally biased stretch (polar residues) spans 795–804 (PMTTVATQTL).

It belongs to the PA-PLA1 family. In terms of assembly, forms homooligomers and, to a much smaller extent, heterooligomers with DDHD2. Interacts with SEC23A and SEC24C. As to expression, expressed in mature testis.

It localises to the cytoplasm. The catalysed reaction is a 1,2-diacyl-sn-glycero-3-phosphate + H2O = a 2-acyl-sn-glycerol 3-phosphate + a fatty acid + H(+). It catalyses the reaction a 1,2-diacyl-sn-glycero-3-phospho-(1D-myo-inositol) + H2O = a 2-acyl-sn-glycero-3-phospho-D-myo-inositol + a fatty acid + H(+). The enzyme catalyses 1-octadecanoyl-2-(5Z,8Z,11Z,14Z-eicosatetraenoyl)-sn-glycero-3-phospho-(1D-myo-inositol) + H2O = 2-(5Z,8Z,11Z,14Z-eicosatetraenoyl)-sn-glycero-3-phospho-(1D-myo-inositol) + octadecanoate + H(+). It carries out the reaction a 1-acyl-2-(5Z,8Z,11Z,14Z-eicosatetraenoyl)-sn-glycero-3-phospho-(1D-myo-inositol) + H2O = 2-(5Z,8Z,11Z,14Z-eicosatetraenoyl)-sn-glycero-3-phospho-(1D-myo-inositol) + a fatty acid + H(+). The catalysed reaction is 1,2-dihexadecanoyl-sn-glycero-3-phospho-(1D-myo-inositol) + H2O = 2-hexadecanoyl-sn-glycero-3-phospho-(1D-myo-inositol) + hexadecanoate + H(+). It catalyses the reaction 1,2-di-(9Z-octadecenoyl)-sn-glycero-3-phosphate + H2O = 2-(9Z-octadecenoyl)-sn-glycero-3-phosphate + (9Z)-octadecenoate + H(+). The enzyme catalyses a 1-acyl-2-(5Z,8Z,11Z,14Z)-eicosatetraenoyl-sn-glycero-3-phosphate + H2O = 2-(5Z,8Z,11Z,14Z-eicosatetraenoyl)-sn-glycero-3-phosphate + a fatty acid + H(+). It carries out the reaction 1-hexadecanoyl-2-(9Z-octadecenoyl)-sn-glycero-3-phosphate + H2O = 2-(9Z-octadecenoyl)-sn-glycero-3-phosphate + hexadecanoate + H(+). The catalysed reaction is 1-hexadecanoyl-2-(9Z-octadecenoyl)-sn-glycero-3-phospho-L-serine + H2O = 2-(9Z-octadecenoyl)-sn-glycero-3-phospho-L-serine + hexadecanoate + H(+). It catalyses the reaction 1,2-di-(5Z,8Z,11Z,14Z)-eicosatetraenoyl-sn-glycero-3-phosphate + H2O = 2-(5Z,8Z,11Z,14Z-eicosatetraenoyl)-sn-glycero-3-phosphate + (5Z,8Z,11Z,14Z)-eicosatetraenoate + H(+). The enzyme catalyses 1-octadecanoyl-2-(5Z,8Z,11Z,14Z-eicosatetraenoyl)-sn-glycero-3-phosphate + H2O = 2-(5Z,8Z,11Z,14Z-eicosatetraenoyl)-sn-glycero-3-phosphate + octadecanoate + H(+). It carries out the reaction a 1,2-diacyl-sn-glycero-3-phosphocholine + H2O = a 2-acyl-sn-glycero-3-phosphocholine + a fatty acid + H(+). The catalysed reaction is a 1,2-diacyl-sn-glycero-3-phosphoethanolamine + H2O = a 2-acyl-sn-glycero-3-phosphoethanolamine + a fatty acid + H(+). It catalyses the reaction a 1,2-diacyl-sn-glycero-3-phospho-L-serine + H2O = a 2-acyl-sn-glycero-3-phospho-L-serine + a fatty acid + H(+). The enzyme catalyses a 1,2-diacyl-sn-glycero-3-phospho-(1'-sn-glycerol) + H2O = 2-acyl-sn-glycero-3-phospho-(1'-sn-glycerol) + a fatty acid + H(+). It carries out the reaction 1-hexadecanoyl-2-(9Z-octadecenoyl)-sn-glycero-3-phospho-(1'-sn-glycerol) + H2O = 2-(9Z-octadecenoyl)-sn-glycero-3-phospho-(1'-sn-glycerol) + hexadecanoate + H(+). The catalysed reaction is 1-acyl-2-(5Z,8Z,11Z,14Z-eicosatetraenoyl)-sn-glycero-3-phosphocholine + H2O = 2-(5Z,8Z,11Z,14Z)-eicosatetraenoyl-sn-glycero-3-phosphocholine + a fatty acid + H(+). It catalyses the reaction 1-acyl-2-(5Z,8Z,11Z,14Z)-eicosatetraenoyl-sn-glycero-3-phosphoethanolamine + H2O = 2-(5Z,8Z,11Z,14Z)-eicosatetraenoyl-sn-glycero-3-phosphoethanolamine + a fatty acid + H(+). The enzyme catalyses 1-(9Z-octadecenoyl)-2-(7Z,10Z,13Z,16Z,19Z-docosapentaenoyl)-sn-glycero-3-phospho-1D-myo-inositol + H2O = 2-(7Z,10Z,13Z,16Z,19Z-docosapentaenoyl)-sn-glycero-3-phospho-1D-myo-inositol + (9Z)-octadecenoate + H(+). It carries out the reaction 1-(9Z-octadecenoyl)-2-(5Z,8Z,11Z,14Z-eicosatetraenoyl)-sn-glycero-3-phospho-1D-myo-inositol + H2O = 2-(5Z,8Z,11Z,14Z-eicosatetraenoyl)-sn-glycero-3-phospho-(1D-myo-inositol) + (9Z)-octadecenoate + H(+). The catalysed reaction is 1,2-di-(9Z-octadecenoyl)-sn-glycero-3-phospho-1D-myo-inositol + H2O = 2-(9Z-octadecenoyl)-sn-glycero-3-phospho-1D-myo-inositol + (9Z)-octadecenoate + H(+). It catalyses the reaction 1-(9Z-octadecenoyl)-2-(8Z,11Z,14Z-eicosatrienoyl)-sn-glycero-3-phospho-1D-myo-inositol + H2O = 2-(8Z,11Z,14Z-eicosatrienoyl)-sn-glycero-3-phospho-1D-myo-inositol + (9Z)-octadecenoate + H(+). The enzyme catalyses 1,2-di-(9Z-octadecenoyl)-sn-glycero-3-phosphocholine + H2O = (9Z-octadecenoyl)-sn-glycero-3-phosphocholine + (9Z)-octadecenoate + H(+). It participates in phospholipid metabolism; phosphatidylinositol metabolism. Phospholipase A1 (PLA1) that hydrolyzes ester bonds at the sn-1 position of glycerophospholipids producing a free fatty acid and a lysophospholipid. Prefers phosphatidate (1,2-diacyl-sn-glycero-3-phosphate, PA) as substrate in vitro, but can efficiently hydrolyze phosphatidylinositol (1,2-diacyl-sn-glycero-3-phospho-(1D-myo-inositol), PI), as well as a range of other glycerophospholipid substrates such as phosphatidylcholine (1,2-diacyl-sn-glycero-3-phosphocholine, PC), phosphatidylethanolamine (1,2-diacyl-sn-glycero-3-phosphoethanolamine, PE), phosphatidylserine (1,2-diacyl-sn-glycero-3-phospho-L-serine, PS) and phosphatidylglycerol (1,2-diacyl-sn-glycero-3-phospho-(1'-sn-glycerol), PG). Involved in the regulation of the endogenous content of polyunsaturated PI and PS lipids in the nervous system. Changes in these lipids extend to downstream metabolic products like PI phosphates PIP and PIP2, which play fundamental roles in cell biology. Regulates mitochondrial morphology. These dynamic changes may be due to PA hydrolysis at the mitochondrial surface. May play a regulatory role in spermatogenesis or sperm function. This is Phospholipase DDHD1 (DDHD1) from Bos taurus (Bovine).